A 679-amino-acid chain; its full sequence is Protein hook (679 aa).

The 118-residue stretch at 6-123 folds into the Calponin-homology (CH) domain; it reads NEMYYSLLEW…RLLQLVLGCA (118 aa). Coiled-coil stretches lie at residues 135–437 and 480–574; these read EIMC…LKCG and QTAL…QEIL.

It belongs to the hook family. Homodimer. Interacts with microtubules via its N-terminus.

It is found in the cytoplasm. The protein localises to the cytoskeleton. Its subcellular location is the endosome. It localises to the synapse. In terms of biological role, involved in endocytic trafficking by stabilizing organelles of the endocytic pathway. Probably acts as a cytoskeletal linker protein required to tether endosome vesicles to the cytoskeleton. Involved in modulation of endocytosis at stages required for down-regulation of membrane proteins that control synapse size. Not involved in synaptic vesicle recycling. Required in R7 cells for boss endocytosis into multivesicular bodies (MVBs). Has a role in regulating adult longevity. This chain is Protein hook, found in Drosophila erecta (Fruit fly).